Consider the following 92-residue polypeptide: Precursor of CEP12 (92 aa).

The N-terminal stretch at 1–30 (MVNRDNSIVALSFFMLFLLVLHLHFETTTA) is a signal peptide. The propeptide occupies 31–70 (ARKPVRVFGPPSSIEWSPPSPPKDDFEWFEINIYKNIEQT). The interval 70 to 92 (TAFRPTGQGPSQGIGHKDPPGAP) is disordered. A hydroxyproline mark is found at Pro-74 and Pro-79. The propeptide occupies 86-92 (KDPPGAP).

The protein belongs to the C-terminally encoded plant signaling peptide (CEP) family. As to quaternary structure, interacts with CEP receptors (e.g. CEPR1 and CEPR2). In terms of processing, the mature small signaling peptide is generated by proteolytic processing of the longer precursor.

It is found in the secreted. Its subcellular location is the extracellular space. The protein localises to the apoplast. Its function is as follows. Extracellular signaling peptide that may regulate primary root growth rate and systemic nitrogen (N)-demand signaling. This is Precursor of CEP12 from Arabidopsis thaliana (Mouse-ear cress).